A 448-amino-acid chain; its full sequence is Probable glycine dehydrogenase (decarboxylating) subunit 1 (448 aa).

The protein belongs to the GcvP family. N-terminal subunit subfamily. As to quaternary structure, the glycine cleavage system is composed of four proteins: P, T, L and H. In this organism, the P 'protein' is a heterodimer of two subunits.

It catalyses the reaction N(6)-[(R)-lipoyl]-L-lysyl-[glycine-cleavage complex H protein] + glycine + H(+) = N(6)-[(R)-S(8)-aminomethyldihydrolipoyl]-L-lysyl-[glycine-cleavage complex H protein] + CO2. Its function is as follows. The glycine cleavage system catalyzes the degradation of glycine. The P protein binds the alpha-amino group of glycine through its pyridoxal phosphate cofactor; CO(2) is released and the remaining methylamine moiety is then transferred to the lipoamide cofactor of the H protein. The sequence is that of Probable glycine dehydrogenase (decarboxylating) subunit 1 from Listeria monocytogenes serotype 4b (strain F2365).